A 215-amino-acid chain; its full sequence is FGFR1 oncogene partner 2 homolog (215 aa).

Positions 35–183 (LLNKRVEAMK…SGLRELLGIS (149 aa)) form a coiled coil.

The protein belongs to the SIKE family.

Its subcellular location is the cytoplasm. The sequence is that of FGFR1 oncogene partner 2 homolog (fgfr1op2) from Danio rerio (Zebrafish).